The sequence spans 2103 residues: MSVPGTPGAMEPAGEEERPPPAAEGEDDEEEVAAAAQTSGPAHGRSASSLEDADDQEEEMEAMVIGGGCCKEQELTYELQQGYRILGEFLQEKHRGLTAPFLQPLGGVATAEEEVAEGPRSGGRGGRAFPQQPGQGMCLLQMEEKFASGQYGGITEFVADFRLMLETCYRLHGVDHWISKQGQKLEMMLEQKLALLSRHLREKTTIAVTSRGYYGLEDEKGTACTSTRRRSTPRSLAGLTSGVFESIMVQVLRQEEQLRAKEEKRLREQERKEAEEASQKEIEEWERKLLAQAAPTCMETMWEIPAIGHFLCLAQQILNLPEIVFYELERCLLMPQCNAFLSKIMTSLLSPPHRRPTLHRRPTLPYRTWEAALRQKVQQWYTAVGQTENPDNCAEKLGLCPQFFKVLGEVNPLEEKPFHELPFYQKVWLLKGLCDFVYETQKEVQDAVLGQPIHECREVILGYDYLENAYVHFPQFCGADVRIYKQRPFQAPEFPIPPIKIQRVPRIKLEKLKCDYVSTSNGEHRCSRDSLPSSFKKEQENNFDPACCPAKMILDNHDISVEMGVKSNYEIRIRRPCEIKKTDCCKENLEKPRSPGEVTGFGEPLSPGEIRFIENQEKYGEASRIKIEPSPLKENTLKSCQIHVNGSHSDHPEINCHKVVRDILLEQSLQSHKKLKLTKMRAKKKKKKKKKLKDVLNENLQRKREGLHSLAFKSYKPEIQNKLLIIKKKAKHKKHKSGKKSVSKKAITKKRKTVIKSPTVPEFQLICTNLDELRELITKIENELKDLENSRKKSGKWYHRRQAVKELHSTLIRLLNELLPWEPKLMKAFQRNRSRLKKDYDDFRRQPDHDTFNRELWTTDEGEGDLGKDSPKGEISKSIDSTEPLDILEKDHFDSDDMKLSEIDFPMARSKLLKKELPSKDLPKTLLKTLKRQSKQTDYVDDSTKELSPRKKAKLSTNETTVENLESDVQIDCFSESKHTEPSFPESFASLDSVPVSTLQKGTKPIQALLAKNIGNKVTLTNQLPPSTGRNALAVEKPVLSPPEASPIKPALTCHTNTKGPLQMVYKMPCGQWLPIDLQNSSVKIQVQPMVDPKTGEKIMQQVLILPKNFVIQHKEGKAVAKEVPPLQQKGTEQHCSSFPQTTNINSSLASVFVNSPGTVSTQLPNTAFNKTITPLSNISSARPQPLSPVTSVSNLLTPSVKTSQSEAGKAKNAVSAATFSLPSASPTISSTGQPLSSTTTLNGSTNPGSSFNCFAQQTADSSEAKQELKTVCIRDSQSILVRTRGGNTGVVKVQTNPDQNSPNTVSSSSVFTFAPQLQAFLVPKSTTSSSAFSPVAGTTTTSSLSPFSQTPTSVSIPASFAPSMGKNLKLTLGHTTGSGDLGHVIDKTSHMPSSPLKSSICSSTLLPSTTSSSVSVISISAANFGQNNANIIHTPTKQQQVDYITKSYPVTRSEATAATNGDVISGTPVQKLMLVSAPSILSSGNGTAINMTPALTSTGVSAQKLVFINAPVPSGTSTPTLVAESLKQTLPPPLHKAYVKTPEQPQIVLIPSTVGTPIKINSSPAVSQIKDVKIGLNIGQAIVNTSGTVPAIPSINILQNVTPKGEDKSSKGYILPLSTSGNSVPVSSNFVSQNITPVNESVVSSARAVNVLSVTGANLSLGSFPVTSASASAGAQPPVLVSGNDTSSRIMPILSNRLCSSSLGNTVAISTVKTGHLASSVLISTTQPVVSPKCLTSALQIPVTVALPTPATTSPKIINTVPHSAAVPGATRSVSISKRQSRTSLQFHSPGISTTVPTNVNTNKPQTELSSLSTSPGKITNTSNFASLPNQQALVKTPSYSSAPGGTTIHTASAPSNVTSLVGSQFSEPCIQQKIVINTSTPLAPGTQIMINGTRFIVPPQGLGAGSHVLLISTNPKYGAPLVLNSGQGIQSTPIDNSAQKITLASNNSLSGQPLQHPLRSPTKFINSFGNASSIPTVHTSPQLINTTAKVPVPPPVPTVSLTSVIKSPATLLAKTSLVSAICPSNPPLPSSTSVFHLDPPVKKLLVSPEGAILNTINTPASKVSSLSPSLSQIVVSASRSPASVFPAFQSSGLEKPDRAAS.

The span at 1–12 (MSVPGTPGAMEP) shows a compositional bias: low complexity. Residues 1 to 61 (MSVPGTPGAM…DADDQEEEME (61 aa)) form a disordered region. The span at 51-61 (EDADDQEEEME) shows a compositional bias: acidic residues. Positions 77–196 (YELQQGYRIL…MMLEQKLALL (120 aa)) constitute a Bromo domain. Disordered regions lie at residues 730–750 (AKHK…ITKK), 853–881 (NREL…SIDS), 933–956 (QSKQ…AKLS), 1224–1244 (SASP…TLNG), and 1770–1817 (GATR…STSP). The span at 865-877 (DLGKDSPKGEISK) shows a compositional bias: basic and acidic residues. Polar residues predominate over residues 1224–1234 (SASPTISSTGQ). The segment covering 1235–1244 (PLSSTTTLNG) has biased composition (low complexity). Over residues 1773–1794 (RSVSISKRQSRTSLQFHSPGIS) the composition is skewed to polar residues. Residues 1795–1808 (TTVPTNVNTNKPQT) are compositionally biased toward low complexity.

The protein localises to the nucleus. This is an uncharacterized protein from Homo sapiens (Human).